The sequence spans 165 residues: 6,7-dimethyl-8-ribityllumazine synthase (165 aa).

Residues F24, 62 to 64 (AFE), and 86 to 88 (AVI) contribute to the 5-amino-6-(D-ribitylamino)uracil site. A (2S)-2-hydroxy-3-oxobutyl phosphate-binding site is contributed by 91 to 92 (DT). The active-site Proton donor is the H94. F119 contacts 5-amino-6-(D-ribitylamino)uracil. R133 is a binding site for (2S)-2-hydroxy-3-oxobutyl phosphate.

The protein belongs to the DMRL synthase family.

It carries out the reaction (2S)-2-hydroxy-3-oxobutyl phosphate + 5-amino-6-(D-ribitylamino)uracil = 6,7-dimethyl-8-(1-D-ribityl)lumazine + phosphate + 2 H2O + H(+). It functions in the pathway cofactor biosynthesis; riboflavin biosynthesis; riboflavin from 2-hydroxy-3-oxobutyl phosphate and 5-amino-6-(D-ribitylamino)uracil: step 1/2. In terms of biological role, catalyzes the formation of 6,7-dimethyl-8-ribityllumazine by condensation of 5-amino-6-(D-ribitylamino)uracil with 3,4-dihydroxy-2-butanone 4-phosphate. This is the penultimate step in the biosynthesis of riboflavin. The sequence is that of 6,7-dimethyl-8-ribityllumazine synthase from Prochlorococcus marinus (strain MIT 9303).